We begin with the raw amino-acid sequence, 959 residues long: Autophagy-related protein 18g (959 aa).

2 WD repeats span residues 376 to 416 (AHTS…SHNA) and 438 to 479 (ITSA…AAFQ). The interval 802 to 832 (GSIESAESSEEGSTKQMENLHDSDHMSNSIK) is disordered.

It belongs to the WD repeat PROPPIN family. As to quaternary structure, component of the PI(3,5)P2 regulatory complex at least composed of ATG18, SAC/FIG4, FAB1 and VAC14. Expressed in leaves.

Its subcellular location is the preautophagosomal structure membrane. It is found in the vacuole membrane. Functionally, the PI(3,5)P2 regulatory complex regulates both the synthesis and turnover of phosphatidylinositol 3,5-bisphosphate (PtdIns(3,5)P2). Required for autophagy. The sequence is that of Autophagy-related protein 18g (ATG18G) from Arabidopsis thaliana (Mouse-ear cress).